Here is a 272-residue protein sequence, read N- to C-terminus: Formamidopyrimidine-DNA glycosylase (272 aa).

Proline 2 (schiff-base intermediate with DNA) is an active-site residue. Glutamate 3 serves as the catalytic Proton donor. Lysine 58 functions as the Proton donor; for beta-elimination activity in the catalytic mechanism. DNA is bound by residues histidine 91, arginine 111, and arginine 153. The FPG-type zinc finger occupies 238–272; the sequence is AVYGRANKACVICSKPLKEIRQAQRSTVFCINCQS. Arginine 262 serves as the catalytic Proton donor; for delta-elimination activity.

This sequence belongs to the FPG family. Monomer. Zn(2+) is required as a cofactor.

It catalyses the reaction Hydrolysis of DNA containing ring-opened 7-methylguanine residues, releasing 2,6-diamino-4-hydroxy-5-(N-methyl)formamidopyrimidine.. It carries out the reaction 2'-deoxyribonucleotide-(2'-deoxyribose 5'-phosphate)-2'-deoxyribonucleotide-DNA = a 3'-end 2'-deoxyribonucleotide-(2,3-dehydro-2,3-deoxyribose 5'-phosphate)-DNA + a 5'-end 5'-phospho-2'-deoxyribonucleoside-DNA + H(+). Involved in base excision repair of DNA damaged by oxidation or by mutagenic agents. Acts as a DNA glycosylase that recognizes and removes damaged bases. Has a preference for oxidized purines, such as 7,8-dihydro-8-oxoguanine (8-oxoG). Has AP (apurinic/apyrimidinic) lyase activity and introduces nicks in the DNA strand. Cleaves the DNA backbone by beta-delta elimination to generate a single-strand break at the site of the removed base with both 3'- and 5'-phosphates. The sequence is that of Formamidopyrimidine-DNA glycosylase from Marinomonas sp. (strain MWYL1).